Reading from the N-terminus, the 195-residue chain is Cbp/p300-interacting transactivator 1 (195 aa).

Disordered regions lie at residues 1–24 and 51–149; these read MPTMSRPALDVKGGTSPVKENANP and ASNG…SPAI. Residues 54-78 show a composition bias toward low complexity; it reads GTKASGAPTSSSGSPSPISSSTATP. Residues 97-106 show a composition bias toward polar residues; the sequence is MQLQKLNSQY. A compositionally biased stretch (low complexity) spans 137 to 148; it reads SLSPSAGAQSPA. A Nuclear export signal motif is present at residues 160 to 169; the sequence is LMSLVVELGL.

Belongs to the CITED family. In terms of assembly, interacts (via C-terminus) with CREBBP. Interacts with EGR2. Homodimer. Binds to RBM14. Interacts (via N-terminus) with HSPA8; the interaction suppresses the association of CITED1 with p300/CBP and SMAD-mediated transcription transactivation. Interacts (via C-terminus) with TOX3 (via HGM box); the interaction increases estrogen-response element (ERE)-dependent transcription and protection against cell death. Interacts with ESR1; the interaction occurs in a estrogen-dependent manner. Interacts (unphosphorylated form preferentially and via C-terminus) with EP300. Phosphorylated. Phosphorylation changes in a cell cycle-dependent manner and reduces its transcriptional cofactor activity.

The protein resides in the nucleus. Its subcellular location is the cytoplasm. Transcriptional coactivator of the p300/CBP-mediated transcription complex. Enhances SMAD-mediated transcription by strengthening the functional link between the DNA-binding SMAD transcription factors and the p300/CBP transcription coactivator complex. Stimulates estrogen-dependent transactivation activity mediated by estrogen receptors signaling; stabilizes the interaction of estrogen receptor ESR1 and histone acetyltransferase EP300. Positively regulates TGF-beta signaling through its association with the SMAD/p300/CBP-mediated transcriptional coactivator complex. Induces transcription from estrogen-responsive promoters and protection against cell death. Potentiates EGR2-mediated transcriptional activation activity from the ERBB2 promoter. Acts as an inhibitor of osteoblastic mineralization through a cAMP-dependent parathyroid hormone receptor signaling. May play a role in pigmentation of melanocytes. Associates with chromatin to the estrogen-responsive TGF-alpha promoter region in a estrogen-dependent manner. This is Cbp/p300-interacting transactivator 1 (CITED1) from Bos taurus (Bovine).